The following is a 380-amino-acid chain: Ribosomal RNA large subunit methyltransferase G (380 aa).

It belongs to the methyltransferase superfamily. RlmG family.

Its subcellular location is the cytoplasm. The enzyme catalyses guanosine(1835) in 23S rRNA + S-adenosyl-L-methionine = N(2)-methylguanosine(1835) in 23S rRNA + S-adenosyl-L-homocysteine + H(+). Its function is as follows. Specifically methylates the guanine in position 1835 (m2G1835) of 23S rRNA. This Aeromonas hydrophila subsp. hydrophila (strain ATCC 7966 / DSM 30187 / BCRC 13018 / CCUG 14551 / JCM 1027 / KCTC 2358 / NCIMB 9240 / NCTC 8049) protein is Ribosomal RNA large subunit methyltransferase G.